The chain runs to 271 residues: ATP synthase subunit a (271 aa).

Transmembrane regions (helical) follow at residues 38 to 58, 100 to 120, 146 to 166, 220 to 240, and 242 to 262; these read FWTL…LFLA, LIAP…LMDL, DVNI…FYSI, LIFI…LNVP, and AIFH…LTIV.

The protein belongs to the ATPase A chain family. As to quaternary structure, F-type ATPases have 2 components, CF(1) - the catalytic core - and CF(0) - the membrane proton channel. CF(1) has five subunits: alpha(3), beta(3), gamma(1), delta(1), epsilon(1). CF(0) has three main subunits: a(1), b(2) and c(9-12). The alpha and beta chains form an alternating ring which encloses part of the gamma chain. CF(1) is attached to CF(0) by a central stalk formed by the gamma and epsilon chains, while a peripheral stalk is formed by the delta and b chains.

It localises to the cell inner membrane. Functionally, key component of the proton channel; it plays a direct role in the translocation of protons across the membrane. In Enterobacter sp. (strain 638), this protein is ATP synthase subunit a.